The following is a 656-amino-acid chain: KVSDSAYSNSCSNSQSQRSGSSKSRLSGSHSSGSSGYGGKPSTQASSSDMIIKRNKDKSRKKKKNKGTGQGAGQAQTLISASTSLEGRDEEKPRPSGTGCVEQQICRELQDQQHGEDHSEPQATEQLQQEEEDQSGSESEADRVEGVAKSEAAQSFPIPSPLSVTIVPPSMGGCGGVGHAAGLDSGLAKFDKTWEAGPGKLESMTGVGAAAAGTGQRGERVKEDSFCCVISMHDGIVLYTTPSITDVLGYPRDMWLGRSFIDFVHLKDRATFASQITTGIPIAESRGSVPKDAKSTFCVMLRRYRGLKSGGFGVIGRPVSYEPFRLGLTFREAPEEARPDNYMVSNGTNMLLVICATPIKSSYKVPDEILSQKSPKFAIRHTATGIISHVDSAAVSALGYLPQDLIGRSIMDFYHHEDLSVMKETYETVMKKGQTAGASFCSKPYRFLIQNGCYVLLETEWTSFVNPWSRKLEFVVGHHRVFQGPKQCNVFEAAPTCKLKISEEAQSRNTRIKEDIVKRLAETVSRPSDTVKQEVSRRCQALASFMETLMDEVSRADLKSGSSGNFTTASNIHMSSVTNTSIAGTGGTGTGTGTGTGTGTGTGTGTGTGTGTGTGTGTGTGTGTGTGTGTGTGNGTNSGTGTGTTSSSRGGSTAIP.

The span at 1–34 (KVSDSAYSNSCSNSQSQRSGSSKSRLSGSHSSGS) shows a compositional bias: low complexity. The tract at residues 1–161 (KVSDSAYSNS…AAQSFPIPSP (161 aa)) is disordered. The Nuclear localization signal motif lies at 53 to 66 (KRNKDKSRKKKKNK). The segment covering 53–66 (KRNKDKSRKKKKNK) has biased composition (basic residues). Residues 108 to 120 (ELQDQQHGEDHSE) show a composition bias toward basic and acidic residues. PAS domains lie at 224–359 (DSFC…ATPI) and 377–483 (FAIR…RVFQ). Positions 580 to 656 (TSIAGTGGTG…SSRGGSTAIP (77 aa)) are disordered. A run of 26 repeats spans residues 584 to 585 (GT), 587 to 588 (GT), 589 to 590 (GT), 591 to 592 (GT), 593 to 594 (GT), 595 to 596 (GT), 597 to 598 (GT), 599 to 600 (GT), 601 to 602 (GT), 603 to 604 (GT), 605 to 606 (GT), 607 to 608 (GT), 609 to 610 (GT), 611 to 612 (GT), 613 to 614 (GT), 615 to 616 (GT), 617 to 618 (GT), 619 to 620 (GT), 621 to 622 (GT), 623 to 624 (GT), 625 to 626 (GT), 627 to 628 (GT), 629 to 630 (GT), 631 to 632 (GT), 633 to 634 (GN), and 635 to 636 (GT). Residues 584–642 (GTGGTGTGTGTGTGTGTGTGTGTGTGTGTGTGTGTGTGTGTGTGTGTGTGNGTNSGTGT) show a composition bias toward gly residues. The 30 X 2 AA approximate tandem repeats of G-[TN] stretch occupies residues 584–644 (GTGGTGTGTG…GTNSGTGTGT (61 aa)). Residues 637-638 (NS) form a 27; approximate repeat. A run of 3 repeats spans residues 639-640 (GT), 641-642 (GT), and 643-644 (GT). Low complexity predominate over residues 643–656 (GTTSSSRGGSTAIP).

Forms a heterodimer with timeless (TIM); the complex then translocates into the nucleus. Post-translationally, phosphorylated with a circadian rhythmicity, probably by the double-time protein (dbt). Phosphorylation could be implicated in the stability of per monomer and in the formation of heterodimer per-tim.

The protein localises to the nucleus. It is found in the cytoplasm. Its subcellular location is the perinuclear region. Essential for biological clock functions. Determines the period length of circadian and ultradian rhythms; an increase in PER dosage leads to shortened circadian rhythms and a decrease leads to lengthened circadian rhythms. Essential for the circadian rhythmicity of locomotor activity, eclosion behavior, and for the rhythmic component of the male courtship song that originates in the thoracic nervous system. The biological cycle depends on the rhythmic formation and nuclear localization of the TIM-PER complex. Light induces the degradation of TIM, which promotes elimination of PER. Nuclear activity of the heterodimer coordinatively regulates PER and TIM transcription through a negative feedback loop. Behaves as a negative element in circadian transcriptional loop. Does not appear to bind DNA, suggesting indirect transcriptional inhibition. This is Period circadian protein (per) from Drosophila simulans (Fruit fly).